We begin with the raw amino-acid sequence, 410 residues long: UDP-N-acetylglucosamine--N-acetylmuramyl-(pentapeptide) pyrophosphoryl-undecaprenol N-acetylglucosamine transferase (410 aa).

Positions 1–34 (MKDTVSQPAGGRGATAPRPADAASPSCGSSPSAD) are disordered. Residues 14-34 (ATAPRPADAASPSCGSSPSAD) are compositionally biased toward low complexity. Residues 45–47 (TAG), Asn167, Arg204, Ser238, and Gln334 each bind UDP-N-acetyl-alpha-D-glucosamine.

The protein belongs to the glycosyltransferase 28 family. MurG subfamily.

It is found in the cell membrane. It carries out the reaction di-trans,octa-cis-undecaprenyl diphospho-N-acetyl-alpha-D-muramoyl-L-alanyl-D-glutamyl-meso-2,6-diaminopimeloyl-D-alanyl-D-alanine + UDP-N-acetyl-alpha-D-glucosamine = di-trans,octa-cis-undecaprenyl diphospho-[N-acetyl-alpha-D-glucosaminyl-(1-&gt;4)]-N-acetyl-alpha-D-muramoyl-L-alanyl-D-glutamyl-meso-2,6-diaminopimeloyl-D-alanyl-D-alanine + UDP + H(+). The protein operates within cell wall biogenesis; peptidoglycan biosynthesis. Functionally, cell wall formation. Catalyzes the transfer of a GlcNAc subunit on undecaprenyl-pyrophosphoryl-MurNAc-pentapeptide (lipid intermediate I) to form undecaprenyl-pyrophosphoryl-MurNAc-(pentapeptide)GlcNAc (lipid intermediate II). This is UDP-N-acetylglucosamine--N-acetylmuramyl-(pentapeptide) pyrophosphoryl-undecaprenol N-acetylglucosamine transferase from Mycobacterium bovis (strain ATCC BAA-935 / AF2122/97).